The chain runs to 277 residues: Proteasome subunit beta type-7 (277 aa).

Positions 1–43 (MAAVSVYAPPVGGFSFDNCRRNAVLEADFAKRGYKLPKVRKTG) are cleaved as a propeptide — removed in mature form. Threonine 44 functions as the Nucleophile in the catalytic mechanism.

It belongs to the peptidase T1B family. As to quaternary structure, the 26S proteasome consists of a 20S proteasome core and two 19S regulatory subunits. The 20S proteasome core is a barrel-shaped complex made of 28 subunits that are arranged in four stacked rings. The two outer rings are each formed by seven alpha subunits, and the two inner rings are formed by seven beta subunits. The proteolytic activity is exerted by three beta-subunits PSMB5, PSMB6 and PSMB7. In terms of assembly, (Microbial infection) Interacts with HIV-1 Tat protein. In terms of tissue distribution, expressed at a low level in colonic mucosa. Up-regulated in colorectal cancer tissues.

The protein localises to the cytoplasm. The protein resides in the nucleus. It catalyses the reaction Cleavage of peptide bonds with very broad specificity.. In terms of biological role, component of the 20S core proteasome complex involved in the proteolytic degradation of most intracellular proteins. This complex plays numerous essential roles within the cell by associating with different regulatory particles. Associated with two 19S regulatory particles, forms the 26S proteasome and thus participates in the ATP-dependent degradation of ubiquitinated proteins. The 26S proteasome plays a key role in the maintenance of protein homeostasis by removing misfolded or damaged proteins that could impair cellular functions, and by removing proteins whose functions are no longer required. Associated with the PA200 or PA28, the 20S proteasome mediates ubiquitin-independent protein degradation. This type of proteolysis is required in several pathways including spermatogenesis (20S-PA200 complex) or generation of a subset of MHC class I-presented antigenic peptides (20S-PA28 complex). Within the 20S core complex, PSMB7 displays a trypsin-like activity. This is Proteasome subunit beta type-7 from Homo sapiens (Human).